The chain runs to 83 residues: Small ribosomal subunit protein bS16 (83 aa).

It belongs to the bacterial ribosomal protein bS16 family.

The protein is Small ribosomal subunit protein bS16 of Albidiferax ferrireducens (strain ATCC BAA-621 / DSM 15236 / T118) (Rhodoferax ferrireducens).